The primary structure comprises 270 residues: Inositol monophosphatase (270 aa).

Residues Glu-71, Asp-91, Leu-93, and Asp-94 each contribute to the Mg(2+) site. Glu-71 is a substrate binding site. Residues 93-96 (LDGT), 194-196 (GSC), Glu-213, and Asp-221 contribute to the substrate site. Residue Asp-221 coordinates Mg(2+).

It belongs to the inositol monophosphatase superfamily. The cofactor is Mg(2+).

The enzyme catalyses a myo-inositol phosphate + H2O = myo-inositol + phosphate. It functions in the pathway polyol metabolism; myo-inositol biosynthesis; myo-inositol from D-glucose 6-phosphate: step 2/2. Inhibited by Li(+). Its function is as follows. Responsible for the provision of inositol required for synthesis of phosphatidylinositol and polyphosphoinositides. The chain is Inositol monophosphatase (IMP1) from Mesembryanthemum crystallinum (Common ice plant).